Here is a 184-residue protein sequence, read N- to C-terminus: Flavin prenyltransferase UbiX (184 aa).

FMN-binding positions include 9-11 (GAS), Ser-34, 85-88 (SMKT), and Arg-120. Dimethylallyl phosphate contacts are provided by Tyr-150 and Arg-166.

The protein belongs to the UbiX/PAD1 family.

It catalyses the reaction dimethylallyl phosphate + FMNH2 = prenylated FMNH2 + phosphate. Functionally, flavin prenyltransferase that catalyzes the synthesis of the prenylated FMN cofactor (prenyl-FMN) for 4-hydroxy-3-polyprenylbenzoic acid decarboxylase UbiD. The prenyltransferase is metal-independent and links a dimethylallyl moiety from dimethylallyl monophosphate (DMAP) to the flavin N5 and C6 atoms of FMN. The protein is Flavin prenyltransferase UbiX of Methanocaldococcus jannaschii (strain ATCC 43067 / DSM 2661 / JAL-1 / JCM 10045 / NBRC 100440) (Methanococcus jannaschii).